Consider the following 365-residue polypeptide: UDP-N-acetylglucosamine--N-acetylmuramyl-(pentapeptide) pyrophosphoryl-undecaprenol N-acetylglucosamine transferase (365 aa).

Residues 10 to 12 (TGG), Asn-124, Arg-165, Ser-193, Ile-248, and Gln-293 contribute to the UDP-N-acetyl-alpha-D-glucosamine site.

The protein belongs to the glycosyltransferase 28 family. MurG subfamily.

It is found in the cell inner membrane. It catalyses the reaction di-trans,octa-cis-undecaprenyl diphospho-N-acetyl-alpha-D-muramoyl-L-alanyl-D-glutamyl-meso-2,6-diaminopimeloyl-D-alanyl-D-alanine + UDP-N-acetyl-alpha-D-glucosamine = di-trans,octa-cis-undecaprenyl diphospho-[N-acetyl-alpha-D-glucosaminyl-(1-&gt;4)]-N-acetyl-alpha-D-muramoyl-L-alanyl-D-glutamyl-meso-2,6-diaminopimeloyl-D-alanyl-D-alanine + UDP + H(+). It participates in cell wall biogenesis; peptidoglycan biosynthesis. Cell wall formation. Catalyzes the transfer of a GlcNAc subunit on undecaprenyl-pyrophosphoryl-MurNAc-pentapeptide (lipid intermediate I) to form undecaprenyl-pyrophosphoryl-MurNAc-(pentapeptide)GlcNAc (lipid intermediate II). In Geotalea uraniireducens (strain Rf4) (Geobacter uraniireducens), this protein is UDP-N-acetylglucosamine--N-acetylmuramyl-(pentapeptide) pyrophosphoryl-undecaprenol N-acetylglucosamine transferase.